The chain runs to 88 residues: Small ribosomal subunit protein bS18 (88 aa).

Positions 1-11 (MTTANTTAKDN) are enriched in low complexity. The segment at 1-21 (MTTANTTAKDNAATKKRGRKA) is disordered.

It belongs to the bacterial ribosomal protein bS18 family. Part of the 30S ribosomal subunit. Forms a tight heterodimer with protein bS6.

Functionally, binds as a heterodimer with protein bS6 to the central domain of the 16S rRNA, where it helps stabilize the platform of the 30S subunit. The protein is Small ribosomal subunit protein bS18 of Thermoanaerobacter pseudethanolicus (strain ATCC 33223 / 39E) (Clostridium thermohydrosulfuricum).